Here is an 817-residue protein sequence, read N- to C-terminus: Two pore calcium channel protein 1 (817 aa).

Topologically, residues 1–113 (MAVSLDDDVP…VHNHFFYMME (113 aa)) are cytoplasmic. Residues 20 to 65 (SAPLPPSNSLGQEQLPSKNGGSHSIHNSQVPSLVSGADSPPSSPTG) are disordered. Positions 26 to 51 (SNSLGQEQLPSKNGGSHSIHNSQVPS) are enriched in polar residues. The helical transmembrane segment at 114-134 (LLTALLLLLLSLCESPAVPVL) threads the bilayer. Topologically, residues 135–137 (KLH) are extracellular. A helical transmembrane segment spans residues 138–158 (TYVHATLELFALMVVVFELCM). Residues 159–172 (KLRWLGFHTFVRHK) lie on the Cytoplasmic side of the membrane. A helical transmembrane segment spans residues 173–193 (RTMVKTSVLVVQFIEAIVVLV). At 194 to 202 (RQTSHVRVT) the chain is on the extracellular side. The chain crosses the membrane as a helical span at residues 203 to 221 (RALRCIFLVDCRYCGGVRR). Residues 222–235 (NLRQIFQSLPPFMD) are Cytoplasmic-facing. A helical transmembrane segment spans residues 236–256 (ILLLLLFFMIIFAILGFYLFS). The Extracellular segment spans residues 257-263 (TNPSDPY). The segment at residues 264–287 (FSTLENSIVNLFVLLTTANFPDVM) is an intramembrane region (helical; Pore-forming). Residues 288–298 (MPSYSRNPWSC) lie on the Extracellular side of the membrane. Residues 299 to 319 (VFFIVYLSIELYFIMNLLLAV) traverse the membrane as a helical segment. The Cytoplasmic portion of the chain corresponds to 320–445 (VFDTFNDIEK…NILVNSKAFQ (126 aa)). The chain crosses the membrane as a helical span at residues 446-466 (YFMYLVVAVNGVWILVETFML). Residues 467–480 (KGGNFTSKHVPWSY) lie on the Extracellular side of the membrane. Asparagine 470 carries an N-linked (GlcNAc...) asparagine glycan. Residues 481-501 (LVFLTIYGVELFMKVAGLGPV) form a helical membrane-spanning segment. The Cytoplasmic segment spans residues 502 to 504 (EYL). The chain crosses the membrane as a helical span at residues 505-527 (SSGWNLFDFSVTAFAFLGLLALT). Topologically, residues 528–535 (LNMEPFYF) are extracellular. Residues 536–550 (IVVLRPLQLLRLFKL) form a helical membrane-spanning segment. Over 551 to 569 (KKRYRNVLDTMFELLPRMA) the chain is Cytoplasmic. A helical membrane pass occupies residues 570–590 (SLGLTLLTFYYSFAIVGMEFF). At 591–630 (NGRLTPNCCNTSTVADAYRFINHTVGNKTKVEEGYYYLNN) the chain is on the extracellular side. The helical; Pore-forming intramembrane region spans 631-654 (FDNILNSFVTLFELTVVNNWYIIM). The Extracellular segment spans residues 655 to 671 (EGVTSQTSHWSRLYFMT). Residues 672–692 (FYIVTMVVMTIIVAFILEAFV) traverse the membrane as a helical segment. The Cytoplasmic portion of the chain corresponds to 693–817 (FRMNYSRKSQ…GSRQRSQTVT (125 aa)). Residues 770-794 (SLKMYQEEIQEWYEEHAREQEQQKL) adopt a coiled-coil conformation. The disordered stretch occupies residues 785 to 817 (HAREQEQQKLRGSVPGPAAQQPPGSRQRSQTVT). Positions 806–817 (PPGSRQRSQTVT) are enriched in polar residues.

It belongs to the calcium channel alpha-1 subunit (TC 1.A.1.11) family. Two pore calcium channel subfamily. In terms of assembly, dimer. Interacts with MTOR; the interaction is required for TPCN1 ATP sensitivity. Interacts with STX7, STX8 and STX12. Interacts with JPT2. Found in a complex with LSM12, TPCN1 and TPCN2. N-glycosylated. Mainly expressed in epithelial tissues like lung, kidney, colon, spleen and liver (at protein level).

The protein localises to the lysosome membrane. It is found in the endosome membrane. The protein resides in the early endosome membrane. It localises to the recycling endosome membrane. The catalysed reaction is Na(+)(in) = Na(+)(out). It catalyses the reaction Ca(2+)(in) = Ca(2+)(out). Na(+) current is inhibited by ATP in a MTORC-dependent manner. ATP sensitivity is independent of PI(3,5)P2. Probably regulated by Mg(2+) ions, cytosolic Mg(2+) selectively inhibits outward current while lysosomal Mg(2+) modestly inhibits both the outward and inward currents. In the absence of Mg(2+), NAADP readily activates TPCN2, with properties similar to PI(3,5)P2. Both current elicited by PI(3,5)P2 as well as NAADP are inhibited by tetrandrine. In terms of biological role, intracellular channel initially characterized as a non-selective Ca(2+)-permeable channel activated by NAADP (nicotinic acid adenine dinucleotide phosphate), it is also a voltage-gated highly-selective Na(+) channel activated directly by PI(3,5)P2 (phosphatidylinositol 3,5-bisphosphate) that senses pH changes and confers electrical excitability to organelles. Localizes to the early and recycling endosomes membranes where it plays a role in the uptake and processing of proteins and regulates organellar membrane excitability, membrane trafficking and pH homeostasis. Ion selectivity is not fixed but rather agonist-dependent and under defined ionic conditions, can be readily activated by both NAADP and PI(3,5)P2. Required for mTOR-dependent nutrient sensing. The protein is Two pore calcium channel protein 1 of Mus musculus (Mouse).